The sequence spans 831 residues: Heat shock 70 kDa protein 15 (831 aa).

Disordered stretches follow at residues 502–579 and 784–831; these read EEEV…KKKV and IMTK…EGST. Residues 512-526 are compositionally biased toward basic and acidic residues; the sequence is DQSEETAKMDTDKAS. A phosphoserine mark is found at Ser533 and Ser536. Residues 787 to 800 are compositionally biased toward low complexity; that stretch reads KPKPAAKAEAPQAK.

It belongs to the heat shock protein 70 (TC 1.A.33) family. HSP110/SSE subfamily.

The protein localises to the cytoplasm. Its subcellular location is the nucleus. Functionally, in cooperation with other chaperones, Hsp70s are key components that facilitate folding of de novo synthesized proteins, assist translocation of precursor proteins into organelles, and are responsible for degradation of damaged protein under stress conditions. This chain is Heat shock 70 kDa protein 15 (HSP70-15), found in Arabidopsis thaliana (Mouse-ear cress).